The following is a 253-amino-acid chain: 5-oxoprolinase subunit A (253 aa).

It belongs to the LamB/PxpA family. Forms a complex composed of PxpA, PxpB and PxpC.

It carries out the reaction 5-oxo-L-proline + ATP + 2 H2O = L-glutamate + ADP + phosphate + H(+). In terms of biological role, catalyzes the cleavage of 5-oxoproline to form L-glutamate coupled to the hydrolysis of ATP to ADP and inorganic phosphate. The polypeptide is 5-oxoprolinase subunit A (Bacillus cereus (strain ZK / E33L)).